The primary structure comprises 855 residues: Sucrose synthase 5 (855 aa).

The GT-B glycosyltransferase stretch occupies residues 279-758; it reads SIFNIVIFSI…GLQRICECYT (480 aa).

The protein belongs to the glycosyltransferase 1 family. Plant sucrose synthase subfamily. As to expression, predominantly expressed in roots, flowers and immature seeds.

Its subcellular location is the cytoplasm. It localises to the membrane. The enzyme catalyses an NDP-alpha-D-glucose + D-fructose = a ribonucleoside 5'-diphosphate + sucrose + H(+). Sucrose-cleaving enzyme that provides UDP-glucose and fructose for various metabolic pathways. This is Sucrose synthase 5 (SUS5) from Oryza sativa subsp. japonica (Rice).